Reading from the N-terminus, the 392-residue chain is Adenosine 3'-phospho 5'-phosphosulfate transporter 2 (392 aa).

Residues 11–35 (NINGSASGQQAPTSNSPTLTRKSSS) are disordered. 10 consecutive transmembrane segments (helical) span residues 62–82 (CAGVFILYILYGYLQELIFTV), 87–107 (PFGWFLTLVQFGYYIGFGLVE), 136–156 (LVLAALTLGTMGLSNSSLGYL), 159–179 (PTQVIFKCCKLIPVLVGSILI), 185–205 (GPLDFAAASCMCIGLAWFTLA), 212–232 (NFNLLGVAMISGALLCDAAIG), 249–269 (VVFYSYGLGFVYLFVIMLVTG), 286–306 (FGYGFLFSLSGYLGIQFVLAL), 314–334 (IAATVTTARKAVTIAFSFVLF), and 338–358 (FTVQYLWSGLIVVLGIYLNVY).

The protein belongs to the nucleotide-sugar transporter family. SLC35B subfamily.

The protein localises to the golgi apparatus membrane. In terms of biological role, mediates the transport of adenosine 3'-phospho 5'-phosphosulfate (PAPS), from cytosol into Golgi. PAPS is a universal sulfuryl donor for sulfation events that take place in the Golgi. Essential for viability. Involved in glycosaminoglycan synthesis and the subsequent signaling. May be involved in hh and dpp signaling by controlling the sulfation of heparan sulfate (HS). This chain is Adenosine 3'-phospho 5'-phosphosulfate transporter 2, found in Drosophila pseudoobscura pseudoobscura (Fruit fly).